A 129-amino-acid polypeptide reads, in one-letter code: Small ribosomal subunit protein uS11 (129 aa).

The protein belongs to the universal ribosomal protein uS11 family. As to quaternary structure, part of the 30S ribosomal subunit. Interacts with proteins S7 and S18. Binds to IF-3.

Functionally, located on the platform of the 30S subunit, it bridges several disparate RNA helices of the 16S rRNA. Forms part of the Shine-Dalgarno cleft in the 70S ribosome. The sequence is that of Small ribosomal subunit protein uS11 from Actinobacillus succinogenes (strain ATCC 55618 / DSM 22257 / CCUG 43843 / 130Z).